The sequence spans 396 residues: S-adenosylmethionine synthase (396 aa).

ATP is bound at residue His16. Asp18 serves as a coordination point for Mg(2+). Glu44 is a K(+) binding site. Residues Glu57 and Gln100 each coordinate L-methionine. The interval 100 to 110 (QSPDINQGVDR) is flexible loop. ATP is bound by residues 165–167 (DAK), Asp240, 246–247 (RK), Ala263, and Lys267. An L-methionine-binding site is contributed by Asp240. Residue Lys271 participates in L-methionine binding.

Belongs to the AdoMet synthase family. As to quaternary structure, homotetramer; dimer of dimers. Mg(2+) serves as cofactor. Requires K(+) as cofactor.

Its subcellular location is the cytoplasm. It catalyses the reaction L-methionine + ATP + H2O = S-adenosyl-L-methionine + phosphate + diphosphate. It functions in the pathway amino-acid biosynthesis; S-adenosyl-L-methionine biosynthesis; S-adenosyl-L-methionine from L-methionine: step 1/1. Catalyzes the formation of S-adenosylmethionine (AdoMet) from methionine and ATP. The overall synthetic reaction is composed of two sequential steps, AdoMet formation and the subsequent tripolyphosphate hydrolysis which occurs prior to release of AdoMet from the enzyme. This chain is S-adenosylmethionine synthase, found in Pseudomonas fluorescens (strain SBW25).